The primary structure comprises 318 residues: NADH-ubiquinone oxidoreductase chain 1 (318 aa).

8 helical membrane-spanning segments follow: residues Pro2–Leu22, Ile68–Pro88, Leu100–Gly120, Leu146–Ile166, His171–Ala191, Ile231–Ser251, Glu253–Ile273, and Leu294–Ile314.

The protein belongs to the complex I subunit 1 family. As to quaternary structure, core subunit of respiratory chain NADH dehydrogenase (Complex I) which is composed of 45 different subunits.

The protein localises to the mitochondrion inner membrane. The catalysed reaction is a ubiquinone + NADH + 5 H(+)(in) = a ubiquinol + NAD(+) + 4 H(+)(out). Core subunit of the mitochondrial membrane respiratory chain NADH dehydrogenase (Complex I) which catalyzes electron transfer from NADH through the respiratory chain, using ubiquinone as an electron acceptor. Essential for the catalytic activity and assembly of complex I. This Homo sapiens (Human) protein is NADH-ubiquinone oxidoreductase chain 1 (MT-ND1).